A 540-amino-acid chain; its full sequence is Raucaffricine-O-beta-D-glucosidase (540 aa).

A beta-D-glucoside is bound by residues Gln36, His140, and 185–186 (NE). The Proton donor role is filled by Glu186. Cys221 and Cys230 are oxidised to a cystine. A beta-D-glucoside contacts are provided by residues Tyr347, Glu420, Trp469, 476–477 (EW), and Phe485. Catalysis depends on Glu420, which acts as the Nucleophile.

The protein belongs to the glycosyl hydrolase 1 family.

It carries out the reaction raucaffricine + H2O = vomilenine + D-glucose. The catalysed reaction is vomilenine + UDP-alpha-D-glucose = raucaffricine + UDP + H(+). Functionally, glucosidase specifically involved in alkaloid biosynthesis leading to the accumulation of several alkaloids, including ajmaline, an important plant-derived pharmaceutical used in the treatment of heart disorders. The sequence is that of Raucaffricine-O-beta-D-glucosidase from Rauvolfia serpentina (Serpentine wood).